Here is a 173-residue protein sequence, read N- to C-terminus: Lactoylglutathione lyase (173 aa).

The region spanning 24-170 (VFNHTMLRVK…DGYWVEVIQP (147 aa)) is the VOC domain. Histidine 27 lines the Ni(2+) pocket. Residue arginine 31 coordinates substrate. Glutamate 93 lines the Ni(2+) pocket. Positions 97, 116, and 120 each coordinate substrate. Histidine 120 and glutamate 166 together coordinate Ni(2+). Residue glutamate 166 is the Proton donor/acceptor of the active site.

It belongs to the glyoxalase I family. Monomer. Ni(2+) serves as cofactor. Requires Zn(2+) as cofactor.

The enzyme catalyses (R)-S-lactoylglutathione = methylglyoxal + glutathione. The protein operates within secondary metabolite metabolism; methylglyoxal degradation; (R)-lactate from methylglyoxal: step 1/2. Its function is as follows. Catalyzes the conversion of hemimercaptal, formed from methylglyoxal and glutathione, to S-lactoylglutathione. This chain is Lactoylglutathione lyase (gloA), found in Pseudomonas putida (Arthrobacter siderocapsulatus).